A 99-amino-acid chain; its full sequence is Large ribosomal subunit protein bL27 (99 aa).

The propeptide occupies 1 to 10 (MKLIFDIQLF).

Belongs to the bacterial ribosomal protein bL27 family. In terms of processing, the N-terminus is cleaved by ribosomal processing cysteine protease Prp.

In Caldicellulosiruptor bescii (strain ATCC BAA-1888 / DSM 6725 / KCTC 15123 / Z-1320) (Anaerocellum thermophilum), this protein is Large ribosomal subunit protein bL27.